The following is a 91-amino-acid chain: RING finger protein Z (91 aa).

Gly2 carries N-myristoyl glycine; by host lipidation. The segment at 35-71 adopts an RING-type; atypical zinc-finger fold; the sequence is CKCCWFQDKNLVECSDHYLCLKCISSMLKRGKNCEIC. Positions 85–88 match the PTAP/PSAP motif motif; the sequence is PTAP.

The protein belongs to the arenaviridae Z protein family. As to quaternary structure, interacts with protein NP; this interaction probably directs the encapsidated genome to budding sites. Interacts (via RING domain) with polymerase L; this interaction inhibits viral transcription and replication, Z partially blocks the product exit tunnel for the releasing nascent RNA product. Interacts with the glycoprotein complex; this interaction plays a role in virion budding. Interacts with host eIF4E; this interaction results in eIF4E reduced affinity for its substrate, the 5'-m7 G cap structure. Interacts (via late-budding domain) with host TSG101; this interaction is essential for budding and release of viral particles. Interacts with host RPLP0; this interaction may serve to load ribosome-like particles inside the virion. Interacts with host PML; this interaction induces PML bodies redistribution in the cytoplasm upon viral infection. Myristoylation is required for the role of RING finger protein Z in assembly and budding.

It is found in the virion. It localises to the host cytoplasm. Its subcellular location is the host perinuclear region. The protein localises to the host cell membrane. In terms of biological role, plays a crucial role in virion assembly and budding. Expressed late in the virus life cycle, it acts as an inhibitor of viral transcription and RNA synthesis by interacting with the viral polymerase L. Presumably recruits the NP encapsidated genome to cellular membranes at budding sites via direct interaction with NP. Plays critical roles in the final steps of viral release by interacting with host TSG101, a member of the vacuolar protein-sorting pathway and using other cellular host proteins involved in vesicle formation pathway. The budding of the virus progeny occurs after association of protein Z with the viral glycoprotein complex SSP-GP1-GP2 at the cell periphery, step that requires myristoylation of protein Z. Also selectively represses protein production by associating with host eIF4E. In cell-based minigenome assay, has an inhibitory effect on the ribonucleoprotein machinery (vRNP), which is responsible for the replication and transcription of the viral genome. The protein is RING finger protein Z of Latino mammarenavirus (isolate Rat/Bolivia/MARU 1924/1965) (LATV).